Reading from the N-terminus, the 235-residue chain is Demethylmenaquinone methyltransferase (235 aa).

Residues threonine 58, aspartate 79, and 106–107 (NA) each bind S-adenosyl-L-methionine.

Belongs to the class I-like SAM-binding methyltransferase superfamily. MenG/UbiE family.

It carries out the reaction a 2-demethylmenaquinol + S-adenosyl-L-methionine = a menaquinol + S-adenosyl-L-homocysteine + H(+). It participates in quinol/quinone metabolism; menaquinone biosynthesis; menaquinol from 1,4-dihydroxy-2-naphthoate: step 2/2. In terms of biological role, methyltransferase required for the conversion of demethylmenaquinol (DMKH2) to menaquinol (MKH2). In Shouchella clausii (strain KSM-K16) (Alkalihalobacillus clausii), this protein is Demethylmenaquinone methyltransferase.